A 423-amino-acid chain; its full sequence is Type II methyltransferase M.NlaIV (423 aa).

The 420-residue stretch at 4–423 folds into the SAM-dependent MTase C5-type domain; it reads IKFIDLFSGM…AVSERLLHTL (420 aa). Residue Cys-80 is part of the active site.

Belongs to the class I-like SAM-binding methyltransferase superfamily. C5-methyltransferase family.

It carries out the reaction a 2'-deoxycytidine in DNA + S-adenosyl-L-methionine = a 5-methyl-2'-deoxycytidine in DNA + S-adenosyl-L-homocysteine + H(+). In terms of biological role, a methylase that recognizes the double-stranded sequence 5'-GGNNCC-3', methylates C-? on both strands, and protects the DNA from cleavage by the NlaIV endonuclease. This chain is Type II methyltransferase M.NlaIV (nlaIVM), found in Neisseria lactamica.